Reading from the N-terminus, the 484-residue chain is Protein nucleotidyltransferase YdiU (484 aa).

8 residues coordinate ATP: Gly-92, Gly-94, Arg-95, Lys-115, Asp-127, Gly-128, Arg-178, and Arg-185. Asp-258 functions as the Proton acceptor in the catalytic mechanism. The Mg(2+) site is built by Asn-259 and Asp-268. Asp-268 provides a ligand contact to ATP.

Belongs to the SELO family. Mg(2+) serves as cofactor. It depends on Mn(2+) as a cofactor.

It catalyses the reaction L-seryl-[protein] + ATP = 3-O-(5'-adenylyl)-L-seryl-[protein] + diphosphate. It carries out the reaction L-threonyl-[protein] + ATP = 3-O-(5'-adenylyl)-L-threonyl-[protein] + diphosphate. The catalysed reaction is L-tyrosyl-[protein] + ATP = O-(5'-adenylyl)-L-tyrosyl-[protein] + diphosphate. The enzyme catalyses L-histidyl-[protein] + UTP = N(tele)-(5'-uridylyl)-L-histidyl-[protein] + diphosphate. It catalyses the reaction L-seryl-[protein] + UTP = O-(5'-uridylyl)-L-seryl-[protein] + diphosphate. It carries out the reaction L-tyrosyl-[protein] + UTP = O-(5'-uridylyl)-L-tyrosyl-[protein] + diphosphate. Its function is as follows. Nucleotidyltransferase involved in the post-translational modification of proteins. It can catalyze the addition of adenosine monophosphate (AMP) or uridine monophosphate (UMP) to a protein, resulting in modifications known as AMPylation and UMPylation. This Mycolicibacterium smegmatis (strain ATCC 700084 / mc(2)155) (Mycobacterium smegmatis) protein is Protein nucleotidyltransferase YdiU.